The following is a 343-amino-acid chain: Putative MO25-like protein At4g17270 (343 aa).

Belongs to the Mo25 family.

This chain is Putative MO25-like protein At4g17270, found in Arabidopsis thaliana (Mouse-ear cress).